The chain runs to 87 residues: Small ribosomal subunit protein uS17 (87 aa).

This sequence belongs to the universal ribosomal protein uS17 family. In terms of assembly, part of the 30S ribosomal subunit.

Its function is as follows. One of the primary rRNA binding proteins, it binds specifically to the 5'-end of 16S ribosomal RNA. The polypeptide is Small ribosomal subunit protein uS17 (Pelotomaculum thermopropionicum (strain DSM 13744 / JCM 10971 / SI)).